The chain runs to 592 residues: Aspartate--tRNA ligase (592 aa).

Glutamate 173 provides a ligand contact to L-aspartate. The segment at 197–200 is aspartate; sequence QLFK. Residue arginine 219 participates in L-aspartate binding. ATP contacts are provided by residues 219–221 and glutamine 228; that span reads RDE. L-aspartate is bound at residue histidine 449. ATP is bound at residue glutamate 483. An L-aspartate-binding site is contributed by arginine 490. 535 to 538 is a binding site for ATP; the sequence is GLDR.

This sequence belongs to the class-II aminoacyl-tRNA synthetase family. Type 1 subfamily. Homodimer.

Its subcellular location is the cytoplasm. The catalysed reaction is tRNA(Asp) + L-aspartate + ATP = L-aspartyl-tRNA(Asp) + AMP + diphosphate. Its function is as follows. Catalyzes the attachment of L-aspartate to tRNA(Asp) in a two-step reaction: L-aspartate is first activated by ATP to form Asp-AMP and then transferred to the acceptor end of tRNA(Asp). This chain is Aspartate--tRNA ligase, found in Shewanella loihica (strain ATCC BAA-1088 / PV-4).